Consider the following 89-residue polypeptide: MWCGLLRPAEIALGAMAAGQPLKPLPKFYRSKMSPQSVLKCLPIGDEVVEVQRLVRWSWSLRQYANQRTRAVHHEHAAIIIVPHLGHAG.

This is an uncharacterized protein from Sinorhizobium fredii (strain NBRC 101917 / NGR234).